The following is a 295-amino-acid chain: GTPase Era (295 aa).

An Era-type G domain is found at 5 to 172 (YCGYAAIIGR…EQAVHQLMPE (168 aa)). Positions 13–20 (GRPNVGKS) are G1. 13–20 (GRPNVGKS) contacts GTP. The segment at 39–43 (QTTRY) is G2. A G3 region spans residues 60–63 (DTPG). GTP contacts are provided by residues 60 to 64 (DTPGL) and 121 to 124 (NKVD). A G4 region spans residues 121–124 (NKVD). The segment at 151–153 (LSA) is G5. The KH type-2 domain occupies 203–279 (LGQEIPYSLA…FLQLWVKVKS (77 aa)).

Belongs to the TRAFAC class TrmE-Era-EngA-EngB-Septin-like GTPase superfamily. Era GTPase family. Monomer.

It is found in the cytoplasm. The protein localises to the cell inner membrane. An essential GTPase that binds both GDP and GTP, with rapid nucleotide exchange. Plays a role in 16S rRNA processing and 30S ribosomal subunit biogenesis and possibly also in cell cycle regulation and energy metabolism. The protein is GTPase Era of Coxiella burnetii (strain CbuK_Q154) (Coxiella burnetii (strain Q154)).